The following is a 69-amino-acid chain: Antimicrobial peptide Meucin-18 (69 aa).

Residues 1-16 form the signal peptide; the sequence is MVIFLAYFLVVNESEA. Positions 38–69 are excised as a propeptide; it reads ERSVMNRDLENLFDPYQRNLEMDRLLKQLRNY.

This sequence belongs to the non-disulfide-bridged peptide (NDBP) superfamily. Medium-length antimicrobial peptide (group 3) family. Expressed by the venom gland.

The protein localises to the secreted. It is found in the target cell membrane. Functionally, amphipathic peptide that exhibits extensive cytolytic activities against both prokaryotic and eukaryotic cells. Acts by fastly disrupting the bacterial membrane. Is more potent against Gram-positive bacteria than against Gram-negative bacteria, and fungi (LC=25.1-8.3 uM). Shows potent activity against penicillin (MIC=3.0 uM) and methicillin (MIC=1.5-3.0 uM) resistant bacteria. Is lethal to the fungus Beauveria sp (LC=1.9 uM), a highly lethal pathogenic fungus to insects and resistant to many AMPs. Shows hemolytic activity against rabbit erythrocytes (37.7% of inhibition at 6.25 uM) and cytolysis against rat dorsal root ganglions. May act by disrupting the integrity of the bacterial cell membrane. Antibiotic activity is not affected by major negatively charged components of the prokaryotic cell wall (e.g. lipopolysaccharides and lipoteichoic acid). In vivo, intravenous injection into mice tail provokes uncomfortable symptoms with a death rate of 12.5%. In vivo, in a mouse model of lethal peritonitis, shows potent antibiotic activity without cytotoxicity, improving the survival rate. In Mesobuthus eupeus (Lesser Asian scorpion), this protein is Antimicrobial peptide Meucin-18.